A 118-amino-acid chain; its full sequence is Fluoride-specific ion channel FluC 2 (118 aa).

4 consecutive transmembrane segments (helical) span residues 1–21, 33–53, 55–75, and 91–111; these read MIEA…RFAI, FPLA…YIIG, GVTT…FTTF, and ISTF…FAFL. Positions 70 and 73 each coordinate Na(+).

It belongs to the fluoride channel Fluc/FEX (TC 1.A.43) family.

Its subcellular location is the cell membrane. It catalyses the reaction fluoride(in) = fluoride(out). Its activity is regulated as follows. Na(+) is not transported, but it plays an essential structural role and its presence is essential for fluoride channel function. Fluoride-specific ion channel. Important for reducing fluoride concentration in the cell, thus reducing its toxicity. This Bacillus cereus (strain ATCC 14579 / DSM 31 / CCUG 7414 / JCM 2152 / NBRC 15305 / NCIMB 9373 / NCTC 2599 / NRRL B-3711) protein is Fluoride-specific ion channel FluC 2.